The sequence spans 366 residues: HTH-type transcriptional regulator MSMEG_6044/MSMEI_5883 (366 aa).

In terms of domain architecture, HTH lacI-type spans 11-66; it reads ATLASLAAELKVSRTTISNAYNRPDQLSADLRERIFDAAKRLGYPGPDPVARSLRT. Residues 13-32 constitute a DNA-binding region (H-T-H motif); that stretch reads LASLAAELKVSRTTISNAYN.

Its function is as follows. Transcriptional regulator that negatively regulates transcription of the mce4 operon, which is involved in cholesterol transport and utilization. Acts by binding to the promoter region of the mce4 operon. The chain is HTH-type transcriptional regulator MSMEG_6044/MSMEI_5883 from Mycolicibacterium smegmatis (strain ATCC 700084 / mc(2)155) (Mycobacterium smegmatis).